A 393-amino-acid chain; its full sequence is NADH-quinone oxidoreductase subunit D (393 aa).

It belongs to the complex I 49 kDa subunit family. NDH-1 is composed of 14 different subunits. Subunits NuoB, C, D, E, F, and G constitute the peripheral sector of the complex.

It is found in the cell inner membrane. The enzyme catalyses a quinone + NADH + 5 H(+)(in) = a quinol + NAD(+) + 4 H(+)(out). Its function is as follows. NDH-1 shuttles electrons from NADH, via FMN and iron-sulfur (Fe-S) centers, to quinones in the respiratory chain. The immediate electron acceptor for the enzyme in this species is believed to be ubiquinone. Couples the redox reaction to proton translocation (for every two electrons transferred, four hydrogen ions are translocated across the cytoplasmic membrane), and thus conserves the redox energy in a proton gradient. The chain is NADH-quinone oxidoreductase subunit D from Ehrlichia ruminantium (strain Gardel).